Consider the following 670-residue polypeptide: Microtubule-associated protein ssm4 (670 aa).

In terms of domain architecture, CAP-Gly spans 23-65 (GSTDFESGIWLGVELLNGKGKNDGSVKGKRYFSCEKGKGIFVR). Coiled coils occupy residues 209-254 (KSEL…KNSI) and 404-582 (VKTR…KLAD). A Phosphoserine modification is found at Ser-460. Thr-606 carries the phosphothreonine modification.

The protein localises to the cytoplasm. Its subcellular location is the cytoskeleton. It localises to the spindle. Functionally, binds to nuclear microtubules with the effect of either modifying their structure or function. This then promotes meiotic nuclear division. The polypeptide is Microtubule-associated protein ssm4 (ssm4) (Schizosaccharomyces pombe (strain 972 / ATCC 24843) (Fission yeast)).